The chain runs to 640 residues: Preterminal protein (640 aa).

The disordered stretch occupies residues Pro232–Val257. Positions Arg351 to Arg360 match the Nuclear localization signal motif. O-(5'-phospho-DNA)-serine is present on Ser549. The interval Gly614–Phe640 is disordered. Residues Pro620 to Ala634 show a composition bias toward pro residues.

This sequence belongs to the adenoviridae terminal protein family. In terms of assembly, heterodimer with the polymerase; this heterodimer binds to bp 9 to 18 of the genome. Interacts with host POU2F1; POU2F1 binds to the auxiliary sequences in the inverted terminal repeats and tethers the pTP-POL heterodimer to the origin DNA thereby participating in the assembly of the pre-initiation complex (POL-TP-DBP-NFIA-POU2F1). Post-translationally, preterminal protein is used to replicate viral genome, upon genomic encapsidation it is processed first into iTP and finally into TP by adenovirus protease.

It localises to the host nucleus matrix. Functionally, protein covalently bound to the viral DNA that acts as a primer for viral genomic replication by DNA strand displacement. Assembles on the viral origin of replication in an initiation complex with viral polymerase, DBP, host NFIA and host POU2F1/OCT1. During initiation, the polymerase covalently couples the first dCTP with Ser-580 of pTP. The terminal protein stimulates the template activity over 20 fold compared to protein-free templates. Neo-synthesized viral genomes are linked to two preterminal proteins, one for each 5' end. These new genomes are encapsidated in the nucleus, and during capsid maturation by viral protease, preterminal protein is first cleaved into intermediary (iTP), then into mature TP. May play a role in host nuclear matrix localization of genomic DNA. This chain is Preterminal protein, found in Human adenovirus B serotype 7 (HAdV-7).